The following is a 176-amino-acid chain: Small ribosomal subunit protein uS5 (176 aa).

Positions 11-74 (LSEVLVDVNR…QAAKKRMMKV (64 aa)) constitute an S5 DRBM domain.

This sequence belongs to the universal ribosomal protein uS5 family. In terms of assembly, part of the 30S ribosomal subunit. Contacts proteins S4 and S8.

Its function is as follows. With S4 and S12 plays an important role in translational accuracy. Located at the back of the 30S subunit body where it stabilizes the conformation of the head with respect to the body. The chain is Small ribosomal subunit protein uS5 from Rickettsia conorii (strain ATCC VR-613 / Malish 7).